The sequence spans 173 residues: Acetyl-CoA decarbonylase/synthase complex subunit epsilon (173 aa).

It belongs to the CdhB family. In terms of assembly, heterotetramer of two alpha and two epsilon subunits. The ACDS complex is made up of alpha, epsilon, beta, gamma and delta subunits with a probable stoichiometry of (alpha(2)epsilon(2))(4)-beta(8)-(gamma(1)delta(1))(8).

It functions in the pathway one-carbon metabolism; methanogenesis from acetate. In terms of biological role, part of a complex that catalyzes the reversible cleavage of acetyl-CoA, allowing growth on acetate as sole source of carbon and energy. The alpha-epsilon subcomponent functions as a carbon monoxide dehydrogenase. The precise role of the epsilon subunit is unclear; it may have a stabilizing role within the alpha(2)epsilon(2) component and/or be involved in electron transfer to FAD during a potential FAD-mediated CO oxidation. The chain is Acetyl-CoA decarbonylase/synthase complex subunit epsilon from Methanothermobacter thermautotrophicus (strain ATCC 29096 / DSM 1053 / JCM 10044 / NBRC 100330 / Delta H) (Methanobacterium thermoautotrophicum).